Reading from the N-terminus, the 213-residue chain is MNKVLIVDDHLVVREGLKLLIETNDQYTIIGEAENGKVAVRLADELEPDIILMDLYMPEMSGLEAIKQIKEKHDTPIIILTTYNEDHLMIEGIELGAKGYLLKDTSSETLFHTMDAAIRGNVLLQPDILKRLQEIQFERMKKQRNETQLTEKEVIVLKAIAKGLKSKAIAFDLGVSERTVKSRLTSIYNKLGANSRTEAVTIAMQKGILTIDN.

The Response regulatory domain maps to 3-118 (KVLIVDDHLV…TLFHTMDAAI (116 aa)). Residue Asp-54 is modified to 4-aspartylphosphate. Residues 142–207 (KQRNETQLTE…EAVTIAMQKG (66 aa)) enclose the HTH luxR-type domain. The segment at residues 166–185 (SKAIAFDLGVSERTVKSRLT) is a DNA-binding region (H-T-H motif).

Phosphorylated by YdfH.

It localises to the cytoplasm. Its function is as follows. Member of the two-component regulatory system YdfH/YdfI. Regulates the transcription of ydfJ by binding to its promoter region. This chain is Transcriptional regulatory protein YdfI (ydfI), found in Bacillus subtilis (strain 168).